The chain runs to 512 residues: CaM kinase-like vesicle-associated protein (512 aa).

The region spanning 24-286 is the Protein kinase domain; it reads YDLGQVIKTE…AEEAISHEWI (263 aa). A disordered region spans residues 328 to 347; that stretch reads APEQSGTAATQSASDAATPG. Residues 332–347 are compositionally biased toward low complexity; that stretch reads SGTAATQSASDAATPG. Serine 392 carries the post-translational modification Phosphoserine. Residues 393–512 are disordered; sequence ADRSATPATD…AQESQRVETS (120 aa). Polar residues predominate over residues 398–439; that stretch reads TPATDGSATPATDGSVTPATDGSITPATDGSVTPATDRSATP. A Phosphothreonine modification is found at threonine 446. Residues 449-460 are compositionally biased toward polar residues; the sequence is TEESTVPATQSS. Positions 461–478 are enriched in low complexity; the sequence is ALPAAKAAATPEPAVAQP. Threonine 470 carries the phosphothreonine modification.

Belongs to the protein kinase superfamily. CAMK Ser/Thr protein kinase family. In terms of assembly, interacts with calmodulin, in the presence of calcium. Ca(2+) is required as a cofactor.

It localises to the cell membrane. It is found in the cytoplasmic vesicle membrane. Its function is as follows. Does not appear to have detectable kinase activity. This is CaM kinase-like vesicle-associated protein (Camkv) from Mus musculus (Mouse).